Reading from the N-terminus, the 542-residue chain is Membrane protein insertase YidC (542 aa).

Residues 6 to 26 traverse the membrane as a helical segment; that stretch reads NILLIGLLFVSFLLWQQWQAD. A compositionally biased stretch (polar residues) spans 32–41; it reads VAQTQSSVAP. Residues 32–57 are disordered; it reads VAQTQSSVAPSTVADAHSSDVPDADS. 5 consecutive transmembrane segments (helical) span residues 326–346, 350–370, 421–441, 458–478, and 501–521; these read LVVD…LLMF, FVGN…GMLY, GGCL…WVLL, LSVQ…MFIM, and VIFT…WLVG.

The protein belongs to the OXA1/ALB3/YidC family. Type 1 subfamily. As to quaternary structure, interacts with the Sec translocase complex via SecD. Specifically interacts with transmembrane segments of nascent integral membrane proteins during membrane integration.

Its subcellular location is the cell inner membrane. Functionally, required for the insertion and/or proper folding and/or complex formation of integral membrane proteins into the membrane. Involved in integration of membrane proteins that insert both dependently and independently of the Sec translocase complex, as well as at least some lipoproteins. Aids folding of multispanning membrane proteins. The sequence is that of Membrane protein insertase YidC from Shewanella piezotolerans (strain WP3 / JCM 13877).